Consider the following 451-residue polypeptide: MKDEQLYYFEKSPVFKAMMHFSLPMMIGTLLSVIYGILNIYFIGFLEDSHMISAISLTLPVFAILMGLGNLFGVGAGTYISRLLGAKDYSKSKFVSSFSIYGGIALGLIVILVALPFSDQIAAILGARGETLALTSNYLKVMFLSAPFVILFFILEQFARAIGAPMISMIGMLASVGLNIILDPILIFGFDLNVVGAALGTAISNVAAALFFIIYFMKNSDVVSVNIKLAKPNKEMLSEIFKIGIPAFLMSILMGFTGLVLNLFLAHYGNFAIASYGISFRLVQFPELIIMGLCEGVVPLIAYNFMSNKGRMKDVIKAVIMSIGVIFVVCMIAVFTIGHHMVGLFTTDQAIVEMATFILKVTMTSLLLNGIGFLFTGMLQATGQGRGATIMAILQGVVIIPVLFIMNALFGLTGVIWSLLIAESLCALAAMLIVYLLRDRLTVDTSELIEG.

The next 12 helical transmembrane spans lie at 26–46 (MIGT…IGFL), 54–74 (AISL…LFGV), 97–117 (SFSI…ALPF), 139–159 (LKVM…EQFA), 170–190 (IGML…IFGF), 194–214 (VVGA…FFII), 245–265 (IPAF…NLFL), 282–302 (LVQF…PLIA), 318–338 (AVIM…FTIG), 355–375 (ATFI…GFLF), 397–417 (VVII…GVIW), and 418–438 (SLLI…YLLR).

Belongs to the multi antimicrobial extrusion (MATE) (TC 2.A.66.1) family. MepA subfamily.

The protein resides in the cell membrane. Multidrug resistance efflux protein. The chain is Multidrug export protein MepA (mepA) from Staphylococcus aureus (strain MRSA252).